Consider the following 254-residue polypeptide: Phosphate import ATP-binding protein PstB 2 (254 aa).

The ABC transporter domain occupies 9–249 (FNIDNLNLFY…PRDDRTRGYV (241 aa)). 41–48 (GPSGCGKS) provides a ligand contact to ATP.

Belongs to the ABC transporter superfamily. Phosphate importer (TC 3.A.1.7) family. As to quaternary structure, the complex is composed of two ATP-binding proteins (PstB), two transmembrane proteins (PstC and PstA) and a solute-binding protein (PstS).

It localises to the cell inner membrane. It catalyses the reaction phosphate(out) + ATP + H2O = ADP + 2 phosphate(in) + H(+). Functionally, part of the ABC transporter complex PstSACB involved in phosphate import. Responsible for energy coupling to the transport system. The chain is Phosphate import ATP-binding protein PstB 2 from Photobacterium profundum (strain SS9).